Consider the following 271-residue polypeptide: S-adenosylmethionine decarboxylase proenzyme (271 aa).

The active-site Schiff-base intermediate with substrate; via pyruvic acid is Ser-121. A Pyruvic acid (Ser); by autocatalysis modification is found at Ser-121. His-126 functions as the Proton acceptor; for processing activity in the catalytic mechanism. Cys-149 (proton donor; for catalytic activity) is an active-site residue.

This sequence belongs to the prokaryotic AdoMetDC family. Type 2 subfamily. As to quaternary structure, heterooctamer of four alpha and four beta chains arranged as a tetramer of alpha/beta heterodimers. Requires pyruvate as cofactor. In terms of processing, is synthesized initially as an inactive proenzyme. Formation of the active enzyme involves a self-maturation process in which the active site pyruvoyl group is generated from an internal serine residue via an autocatalytic post-translational modification. Two non-identical subunits are generated from the proenzyme in this reaction, and the pyruvate is formed at the N-terminus of the alpha chain, which is derived from the carboxyl end of the proenzyme. The post-translation cleavage follows an unusual pathway, termed non-hydrolytic serinolysis, in which the side chain hydroxyl group of the serine supplies its oxygen atom to form the C-terminus of the beta chain, while the remainder of the serine residue undergoes an oxidative deamination to produce ammonia and the pyruvoyl group blocking the N-terminus of the alpha chain.

The enzyme catalyses S-adenosyl-L-methionine + H(+) = S-adenosyl 3-(methylsulfanyl)propylamine + CO2. It participates in amine and polyamine biosynthesis; S-adenosylmethioninamine biosynthesis; S-adenosylmethioninamine from S-adenosyl-L-methionine: step 1/1. Catalyzes the decarboxylation of S-adenosylmethionine to S-adenosylmethioninamine (dcAdoMet), the propylamine donor required for the synthesis of the polyamines spermine and spermidine from the diamine putrescine. The chain is S-adenosylmethionine decarboxylase proenzyme from Clostridium perfringens (strain ATCC 13124 / DSM 756 / JCM 1290 / NCIMB 6125 / NCTC 8237 / Type A).